The sequence spans 327 residues: MQMPAMMSLLLVSVGLMEALQAQSHPITRRDLFSQEIQLDMALASFDDQYAGCAAAMTAALPDLNHTEFQANQVYADSWTLASSQWQERQARWPEWSLSPTRPSPPPLGFRDEHGVALLAYTANSPLHKEFNAAVREAGRSRAHYLHHFSFKTLHFLLTEALQLLGSGQRPPRCHQVFRGVHGLRFRPAGPRATVRLGGFASASLKHVAAQQFGEDTFFGIWTCLGAPIKGYSFFPGEEEVLIPPFETFQVINASRLAQGPARIYLRALGKHSTYNCEYIKDKKCKSGPCHLDNSAMGQSPLSAVWSLLLLLWFLVVRAFPDGPGLL.

An N-terminal signal peptide occupies residues 1–22 (MQMPAMMSLLLVSVGLMEALQA). 2 disulfide bridges follow: Cys53–Cys277 and Cys174–Cys224. An N-linked (GlcNAc...) asparagine glycan is attached at Asn65. The region spanning 73-273 (QVYADSWTLA…IYLRALGKHS (201 aa)) is the TR mART core domain. Tyr121 and Arg179 together coordinate NAD(+). Catalysis depends on residues Arg179 and Ser202. Residue Ser233 participates in NAD(+) binding. Glu240 is a catalytic residue. Asn253 carries N-linked (GlcNAc...) asparagine glycosylation. Ser295 carries GPI-anchor amidated serine lipidation. A propeptide spans 296 to 327 (AMGQSPLSAVWSLLLLLWFLVVRAFPDGPGLL) (removed in mature form).

Belongs to the Arg-specific ADP-ribosyltransferase family.

Its subcellular location is the sarcoplasmic reticulum membrane. The catalysed reaction is L-arginyl-[protein] + NAD(+) = N(omega)-(ADP-D-ribosyl)-L-arginyl-[protein] + nicotinamide + H(+). In terms of biological role, has ADP-ribosyltransferase activity toward GLP1R. This Homo sapiens (Human) protein is GPI-linked NAD(P)(+)--arginine ADP-ribosyltransferase 1 (ART1).